The primary structure comprises 76 residues: Sec-independent protein translocase protein TatA (76 aa).

The chain crosses the membrane as a helical span at residues 1–21 (MGSFSIWHWLVVLAIVVLVFG). The interval 41–76 (EGMKGAEEESTPPPPAQQVTGHSIKSEIEEKDQTKV) is disordered. Residues 64–76 (IKSEIEEKDQTKV) show a composition bias toward basic and acidic residues.

The protein belongs to the TatA/E family. In terms of assembly, the Tat system comprises two distinct complexes: a TatABC complex, containing multiple copies of TatA, TatB and TatC subunits, and a separate TatA complex, containing only TatA subunits. Substrates initially bind to the TatABC complex, which probably triggers association of the separate TatA complex to form the active translocon.

It localises to the cell inner membrane. Functionally, part of the twin-arginine translocation (Tat) system that transports large folded proteins containing a characteristic twin-arginine motif in their signal peptide across membranes. TatA could form the protein-conducting channel of the Tat system. The polypeptide is Sec-independent protein translocase protein TatA (Nitrosomonas europaea (strain ATCC 19718 / CIP 103999 / KCTC 2705 / NBRC 14298)).